The sequence spans 415 residues: DNA double-strand break repair protein Mre11 (415 aa).

Residues Asp-10, His-12, Asp-51, and Asn-86 each coordinate Mn(2+). The Proton donor role is filled by His-87. Mn(2+) contacts are provided by His-174, His-208, and His-210.

Belongs to the MRE11/RAD32 family. In terms of assembly, homodimer. Forms a heterotetramer composed of two Mre11 subunits and two Rad50 subunits. Mn(2+) serves as cofactor.

Nuclease activity is regulated by Rad50. Part of the Rad50/Mre11 complex, which is involved in the early steps of DNA double-strand break (DSB) repair. The complex may facilitate opening of the processed DNA ends to aid in the recruitment of HerA and NurA. Mre11 binds to DSB ends and has both double-stranded 3'-5' exonuclease activity and single-stranded endonuclease activity. This is DNA double-strand break repair protein Mre11 from Pyrococcus abyssi (strain GE5 / Orsay).